A 364-amino-acid polypeptide reads, in one-letter code: Phosrestin-2 (364 aa).

This sequence belongs to the arrestin family. Phosphorylated, but does not undergo light-induced phosphorylation. In terms of tissue distribution, expressed specifically and abundantly in photoreceptor cells in retina and ocelli.

Its subcellular location is the cell projection. The protein localises to the rhabdomere. Functionally, regulates photoreceptor cell deactivation. Arr1 and Arr2 proteins are mediators of rhodopsin inactivation and are essential for the termination of the phototransduction cascade. Involved in regulating normal cycles of per nuclear accumulation in brain circadian neurons and thus is important for normal circadian behavior. In the dark, functions with Arr2 to promote the formation of cytosolic Bdbt foci, which are required for dco localization to photoreceptor nuclei where it phosphorylates and activates degradation of per. The protein is Phosrestin-2 (Arr1) of Drosophila melanogaster (Fruit fly).